The primary structure comprises 178 residues: Large ribosomal subunit protein uL6 (178 aa).

This sequence belongs to the universal ribosomal protein uL6 family. As to quaternary structure, part of the 50S ribosomal subunit.

Functionally, this protein binds to the 23S rRNA, and is important in its secondary structure. It is located near the subunit interface in the base of the L7/L12 stalk, and near the tRNA binding site of the peptidyltransferase center. In Francisella tularensis subsp. holarctica (strain FTNF002-00 / FTA), this protein is Large ribosomal subunit protein uL6.